We begin with the raw amino-acid sequence, 83 residues long: MKTLLLTLLVVTIVCLDLGYTLECHNQQSSQAPTTTGCSGGETNCYKKSWRDHRGYRIERGCGCPSVKKGIEINCCTTDRCNN.

The first 21 residues, 1–21 (MKTLLLTLLVVTIVCLDLGYT), serve as a signal peptide directing secretion. 4 disulfides stabilise this stretch: Cys24-Cys45, Cys38-Cys62, Cys64-Cys75, and Cys76-Cys81.

It belongs to the three-finger toxin family. Short-chain subfamily. Type I alpha-neurotoxin sub-subfamily. As to expression, expressed by the venom gland.

The protein localises to the secreted. In terms of biological role, binds to muscle nicotinic acetylcholine receptor (nAChR) and inhibit acetylcholine from binding to the receptor, thereby impairing neuromuscular transmission. The protein is Alpha-neurotoxin NTX-2 of Naja sputatrix (Malayan spitting cobra).